The primary structure comprises 314 residues: Elongation factor Ts (314 aa).

Positions 82 to 85 (TDFV) are involved in Mg(2+) ion dislocation from EF-Tu.

The protein belongs to the EF-Ts family.

The protein resides in the cytoplasm. Its function is as follows. Associates with the EF-Tu.GDP complex and induces the exchange of GDP to GTP. It remains bound to the aminoacyl-tRNA.EF-Tu.GTP complex up to the GTP hydrolysis stage on the ribosome. The polypeptide is Elongation factor Ts (Nostoc punctiforme (strain ATCC 29133 / PCC 73102)).